The following is a 253-amino-acid chain: uncharacterized protein (253 aa).

An NADP(+)-binding site is contributed by 10-34; sequence LVTGASSGLGRGLALWLARRGVRVF. Serine 142 is a substrate binding site. Tyrosine 155 (proton acceptor) is an active-site residue.

Belongs to the short-chain dehydrogenases/reductases (SDR) family.

This is an uncharacterized protein from Myxococcus xanthus (strain DK1622).